A 262-amino-acid polypeptide reads, in one-letter code: Insulin-like growth factor-binding protein 1 (262 aa).

The first 25 residues, 1–25, serve as a signal peptide directing secretion; the sequence is MPEVPAVRAWPLLLSLALQLGAAAG. One can recognise an IGFBP N-terminal domain in the interval 28 to 108; it reads QPLHCAPCSA…TRGQGACMPA (81 aa). 6 disulfides stabilise this stretch: Cys-32-Cys-59, Cys-35-Cys-61, Cys-43-Cys-62, Cys-50-Cys-65, Cys-72-Cys-85, and Cys-79-Cys-105. Residues 101–133 form a disordered region; that stretch reads GQGACMPAPSAEATETKDPAAPETTSPESTEMT. Residues 121-131 show a composition bias toward low complexity; the sequence is APETTSPESTE. Phosphoserine occurs at positions 126, 129, and 147. Residue Tyr-161 is modified to Phosphotyrosine. Positions 176–254 constitute a Thyroglobulin type-1 domain; sequence KEPCQRELYK…STAVRGDPKC (79 aa). 3 cysteine pairs are disulfide-bonded: Cys-179–Cys-209, Cys-220–Cys-231, and Cys-233–Cys-254. The residue at position 245 (Ser-245) is a Phosphoserine. A Cell attachment site motif is present at residues 249–251; sequence RGD.

In terms of assembly, binds equally well IGF1 and IGF2. Interacts with integrin ITGA5:ITGB1. Interacts with VHL; this interaction inhibits HIF1A degradation.

The protein localises to the secreted. In terms of biological role, multifunctional protein that plays a critical role in regulating the availability of IGFs such as IGF1 and IGF2 to their receptors and thereby regulates IGF-mediated cellular processes including cell migration, proliferation, differentiation or apoptosis in a cell-type specific manner. Also plays a positive role in cell migration by interacting with integrin ITGA5:ITGB1 through its RGD motif. Mechanistically, binding to integrins leads to activation of focal adhesion kinase/PTK2 and stimulation of the mitogen-activated protein kinase (MAPK) pathway. Regulates cardiomyocyte apoptosis by suppressing HIF-1alpha/HIF1A degradation through ubiquitination. The polypeptide is Insulin-like growth factor-binding protein 1 (IGFBP1) (Sus scrofa (Pig)).